We begin with the raw amino-acid sequence, 188 residues long: ADP-ribosylation factor J (188 aa).

GTP is bound by residues 34 to 40 (DGAGKST), 75 to 79 (DVGGQ), and 134 to 137 (NKQD).

It belongs to the small GTPase superfamily. Arf family.

It is found in the golgi apparatus. In terms of biological role, GTP-binding protein that may be involved in protein trafficking. May modulate vesicle budding and uncoating within the Golgi apparatus. The polypeptide is ADP-ribosylation factor J (arrJ) (Dictyostelium discoideum (Social amoeba)).